The primary structure comprises 423 residues: UDP-N-acetylglucosamine 1-carboxyvinyltransferase 1 (423 aa).

Lysine 24–asparagine 25 contributes to the phosphoenolpyruvate binding site. Arginine 94 provides a ligand contact to UDP-N-acetyl-alpha-D-glucosamine. Cysteine 118 functions as the Proton donor in the catalytic mechanism. Position 118 is a 2-(S-cysteinyl)pyruvic acid O-phosphothioketal (cysteine 118). UDP-N-acetyl-alpha-D-glucosamine is bound by residues arginine 123 to glutamine 127, aspartate 309, and isoleucine 331.

It belongs to the EPSP synthase family. MurA subfamily.

The protein localises to the cytoplasm. The catalysed reaction is phosphoenolpyruvate + UDP-N-acetyl-alpha-D-glucosamine = UDP-N-acetyl-3-O-(1-carboxyvinyl)-alpha-D-glucosamine + phosphate. The protein operates within cell wall biogenesis; peptidoglycan biosynthesis. Its function is as follows. Cell wall formation. Adds enolpyruvyl to UDP-N-acetylglucosamine. The chain is UDP-N-acetylglucosamine 1-carboxyvinyltransferase 1 from Staphylococcus haemolyticus (strain JCSC1435).